The following is a 346-amino-acid chain: Uroporphyrinogen decarboxylase (346 aa).

Substrate contacts are provided by residues 26-30, D76, Y153, S208, and H323; that span reads RQAGR.

The protein belongs to the uroporphyrinogen decarboxylase family. In terms of assembly, homodimer.

The protein localises to the cytoplasm. It carries out the reaction uroporphyrinogen III + 4 H(+) = coproporphyrinogen III + 4 CO2. It functions in the pathway porphyrin-containing compound metabolism; protoporphyrin-IX biosynthesis; coproporphyrinogen-III from 5-aminolevulinate: step 4/4. Its function is as follows. Catalyzes the decarboxylation of four acetate groups of uroporphyrinogen-III to yield coproporphyrinogen-III. This chain is Uroporphyrinogen decarboxylase, found in Prochlorococcus marinus (strain MIT 9215).